Consider the following 130-residue polypeptide: MAAASFYGTGKRKSSIARVWLKPGTGVITVNHKTLDEYFGRETSKMVVKQPLELTENLGKFDIYVTVSGGGDSGQAGAIKHGITKALLEVDAALRTPLKKAGFVTRDSRIKERKKYGKKSARASFQFSKR.

It belongs to the universal ribosomal protein uS9 family.

This Geotalea daltonii (strain DSM 22248 / JCM 15807 / FRC-32) (Geobacter daltonii) protein is Small ribosomal subunit protein uS9.